The primary structure comprises 138 residues: Cell division protein SepF (138 aa).

The disordered stretch occupies residues 1–59 (MNNKFKDFFGFGDNDSYEERDAYEEHYDEQEEMQNSNRPTNSRDSNVVSIKAGQAGSGP). Over residues 33 to 48 (MQNSNRPTNSRDSNVV) the composition is skewed to polar residues.

This sequence belongs to the SepF family. Homodimer. Interacts with FtsZ.

The protein localises to the cytoplasm. Functionally, cell division protein that is part of the divisome complex and is recruited early to the Z-ring. Probably stimulates Z-ring formation, perhaps through the cross-linking of FtsZ protofilaments. Its function overlaps with FtsA. The protein is Cell division protein SepF of Lactobacillus delbrueckii subsp. bulgaricus (strain ATCC 11842 / DSM 20081 / BCRC 10696 / JCM 1002 / NBRC 13953 / NCIMB 11778 / NCTC 12712 / WDCM 00102 / Lb 14).